The chain runs to 626 residues: Endo-1,3(4)-beta-glucanase xgeA (626 aa).

Residues 1–25 (MSSSLMRRVGSLAASAIIFPGIAHA) form the signal peptide. In terms of domain architecture, GH16 spans 33 to 286 (ESWEGEKILN…WAGGVFGDSG (254 aa)). N-linked (GlcNAc...) asparagine glycosylation occurs at N61. E142 acts as the Nucleophile in catalysis. The active-site Proton donor is E147. Residues 477-494 (ASTDAAAATTPAAEPHPS) show a composition bias toward low complexity. The disordered stretch occupies residues 477-533 (ASTDAAAATTPAAEPHPSNAETPADSKSSADAVTAQATKTTIAVNTPNPATDSASSV). A compositionally biased stretch (polar residues) spans 495–533 (NAETPADSKSSADAVTAQATKTTIAVNTPNPATDSASSV). G603 is lipidated: GPI-anchor amidated glycine. Residues 604-626 (VGSKVSISASVAIAAFVMLLLVN) constitute a propeptide, removed in mature form.

It belongs to the glycosyl hydrolase 16 family.

It is found in the cell membrane. It carries out the reaction Endohydrolysis of (1-&gt;3)- or (1-&gt;4)-linkages in beta-D-glucans when the glucose residue whose reducing group is involved in the linkage to be hydrolyzed is itself substituted at C-3.. Functionally, mixed-linked glucanase involved in the degradation of complex natural cellulosic substrates. Active on laminarin. lichenan, soluble carboxymethyl cellulose but not on pustulan. The chain is Endo-1,3(4)-beta-glucanase xgeA (xgeA) from Emericella nidulans (strain FGSC A4 / ATCC 38163 / CBS 112.46 / NRRL 194 / M139) (Aspergillus nidulans).